The primary structure comprises 266 residues: Transcription factor BIP1 (266 aa).

A disordered region spans residues 1 to 73 (MAMYMPSTAS…DREAQRAIRA (73 aa)). Composition is skewed to polar residues over residues 7–22 (STASSTTHIRSPSGTP) and 47–56 (RSVSTLTPSQ). Residues 54-95 (PSQLARKRANDREAQRAIRARTKEHIERLEREVEELKSKQNR) form the bZIP domain. Residues 59–81 (RKRANDREAQRAIRARTKEHIER) form a basic motif region. Basic and acidic residues predominate over residues 61 to 73 (RANDREAQRAIRA). The segment at 82 to 89 (LEREVEEL) is leucine-zipper.

It belongs to the bZIP family. Expressed in appressoria.

The protein resides in the nucleus. In terms of biological role, transcription factor that is required for infection of plants hosts. Is not implicated in the development of appressoria or the subsequent penetration of host leaves, but is necessary for the initial establishment of the fungus within plant cells by orchestrating the expression of a unique set of early invasion-related genes within appressoria, encoding secreted effectors, enzymes, secondary metabolism-related enzymes, and signaling membrane receptors. Controls the expression of targeted genes by interacting directly with a 5'-TGACTC-3' motif present in their promoters. In Pyricularia oryzae (strain 70-15 / ATCC MYA-4617 / FGSC 8958) (Rice blast fungus), this protein is Transcription factor BIP1.